Reading from the N-terminus, the 189-residue chain is Crossover junction endodeoxyribonuclease RuvC (189 aa).

Residues D8, E67, and D139 contribute to the active site. Residues D8, E67, and D139 each coordinate Mg(2+).

It belongs to the RuvC family. As to quaternary structure, homodimer which binds Holliday junction (HJ) DNA. The HJ becomes 2-fold symmetrical on binding to RuvC with unstacked arms; it has a different conformation from HJ DNA in complex with RuvA. In the full resolvosome a probable DNA-RuvA(4)-RuvB(12)-RuvC(2) complex forms which resolves the HJ. It depends on Mg(2+) as a cofactor.

Its subcellular location is the cytoplasm. It carries out the reaction Endonucleolytic cleavage at a junction such as a reciprocal single-stranded crossover between two homologous DNA duplexes (Holliday junction).. In terms of biological role, the RuvA-RuvB-RuvC complex processes Holliday junction (HJ) DNA during genetic recombination and DNA repair. Endonuclease that resolves HJ intermediates. Cleaves cruciform DNA by making single-stranded nicks across the HJ at symmetrical positions within the homologous arms, yielding a 5'-phosphate and a 3'-hydroxyl group; requires a central core of homology in the junction. The consensus cleavage sequence is 5'-(A/T)TT(C/G)-3'. Cleavage occurs on the 3'-side of the TT dinucleotide at the point of strand exchange. HJ branch migration catalyzed by RuvA-RuvB allows RuvC to scan DNA until it finds its consensus sequence, where it cleaves and resolves the cruciform DNA. In Histophilus somni (strain 129Pt) (Haemophilus somnus), this protein is Crossover junction endodeoxyribonuclease RuvC.